The sequence spans 570 residues: Formate--tetrahydrofolate ligase (570 aa).

An ATP-binding site is contributed by 65–72 (TPFGEGKT).

Belongs to the formate--tetrahydrofolate ligase family.

It catalyses the reaction (6S)-5,6,7,8-tetrahydrofolate + formate + ATP = (6R)-10-formyltetrahydrofolate + ADP + phosphate. The protein operates within one-carbon metabolism; tetrahydrofolate interconversion. This is Formate--tetrahydrofolate ligase from Shewanella woodyi (strain ATCC 51908 / MS32).